Consider the following 358-residue polypeptide: Phosphate acyltransferase (358 aa).

Residues 336 to 358 (SAAGAAPASPETAPTPHPSTRAA) form a disordered region.

It belongs to the PlsX family. In terms of assembly, homodimer. Probably interacts with PlsY.

Its subcellular location is the cytoplasm. The enzyme catalyses a fatty acyl-[ACP] + phosphate = an acyl phosphate + holo-[ACP]. It functions in the pathway lipid metabolism; phospholipid metabolism. Its function is as follows. Catalyzes the reversible formation of acyl-phosphate (acyl-PO(4)) from acyl-[acyl-carrier-protein] (acyl-ACP). This enzyme utilizes acyl-ACP as fatty acyl donor, but not acyl-CoA. The protein is Phosphate acyltransferase of Cupriavidus pinatubonensis (strain JMP 134 / LMG 1197) (Cupriavidus necator (strain JMP 134)).